Here is a 372-residue protein sequence, read N- to C-terminus: Signal peptide peptidase-like 1 (372 aa).

The Lumenal segment spans residues 1–6 (METLWT). A helical membrane pass occupies residues 7 to 27 (LLYLLEPAPATLIVTAVTVTF). Over 28–54 (ASAFRALNYGKEMERNRDFSEASITLD) the chain is Cytoplasmic. The chain crosses the membrane as a helical span at residues 55–77 (SSQALMIPVMSSCSLLLMFYLFS). Over 78-81 (SVSQ) the chain is Lumenal. The chain crosses the membrane as a helical span at residues 82 to 104 (LLTAFTAIASVSSLFYWLSPYAV). The Cytoplasmic portion of the chain corresponds to 105 to 123 (YMKTQLGLSDPFLSRCCSK). A helical membrane pass occupies residues 124–146 (SFTRIQGLLLVACAMTVVAWLIS). Residues 147 to 149 (GHW) are Lumenal-facing. Residues 150 to 167 (VLNNLLGISICIAFVSHV) form a helical membrane-spanning segment. Residues 168–171 (RLPN) lie on the Cytoplasmic side of the membrane. Residues 172–192 (IKICAMLLVCLFVYDIFWVFF) traverse the membrane as a helical segment. Residue Asp186 is part of the active site. Residues 193–257 (SERFFGANVM…GVVPGVSASD (65 aa)) lie on the Lumenal side of the membrane. Residues 258 to 278 (FMMLGLGDMAIPAMLLALVLC) form a helical membrane-spanning segment. Residue Asp265 is part of the active site. The Cytoplasmic segment spans residues 279–301 (FDHRKTRDVVNIFDLKSSKGHKY). The chain crosses the membrane as a helical span at residues 302–322 (IWYALPGYAIGLVAALAAGVL). At 323 to 325 (THS) the chain is on the lumenal side. The chain crosses the membrane as a helical span at residues 326–346 (PQPALLYLVPSTLGPVIFMSW). Residues 328–330 (PAL) carry the PAL motif. The Cytoplasmic portion of the chain corresponds to 347–372 (RRKDLAELWEGPALSNPIEKSHEIEI).

The protein belongs to the peptidase A22B family. In terms of tissue distribution, ubiquitous.

Its subcellular location is the endosome membrane. Functionally, intramembrane-cleaving aspartic protease (I-CLiP) that cleaves type II membrane signal peptides in the hydrophobic plane of the membrane. The chain is Signal peptide peptidase-like 1 (SPPL1) from Arabidopsis thaliana (Mouse-ear cress).